A 730-amino-acid chain; its full sequence is GTPase-activating protein GYP7 (730 aa).

Residues 434–619 enclose the Rab-GAP TBC domain; the sequence is VQEDKERDDF…RLWEVLWTDY (186 aa).

Its function is as follows. Most effectively accelerate the intrinsic GTPase activity of YPT7. It is also active, but to a lesser extent, on YPT31, YPT32 and YPT1. YPT6 and SEC4. This chain is GTPase-activating protein GYP7 (GYP7), found in Yarrowia lipolytica (strain CLIB 122 / E 150) (Yeast).